The following is an 889-amino-acid chain: Protein argonaute 15 (889 aa).

Disordered stretches follow at residues 1 to 26 (MESH…SRKG) and 119 to 150 (EDAS…RMKR). Low complexity predominate over residues 122–132 (SSSGRTTTRRS). The 116-residue stretch at 264-379 (PVIEFLLFNQ…IPLELCHLVP (116 aa)) folds into the PAZ domain. In terms of domain architecture, Piwi spans 546–853 (FVLCVLPERK…AAAQVSQFVR (308 aa)). Positions 857-878 (AASEGSGDGGAPPRPVPELPRL) are disordered.

This sequence belongs to the argonaute family. Ago subfamily.

In terms of biological role, probably involved in the RNA silencing pathway. May bind to short RNAs such as microRNAs (miRNAs) or short interfering RNAs (siRNAs), and represses the translation of mRNAs which are complementary to them. This Oryza sativa subsp. japonica (Rice) protein is Protein argonaute 15 (AGO15).